The chain runs to 342 residues: Pre-mRNA-splicing factor 18 (342 aa).

Residue Met1 is modified to N-acetylmethionine.

It belongs to the PRP18 family. Heterodimer with PPIH. Interacts with PRPF4 and with the spliceosome. Part of a complex containing U4/U6 snRNPs.

It is found in the nucleus speckle. Participates in the second step of pre-mRNA splicing. This chain is Pre-mRNA-splicing factor 18 (PRPF18), found in Pongo abelii (Sumatran orangutan).